A 1097-amino-acid polypeptide reads, in one-letter code: Nitric oxide synthase-like protein (1097 aa).

C77 serves as a coordination point for heme b. Q140, W249, Y250, E254, and N259 together coordinate L-arginine. (6R)-L-erythro-5,6,7,8-tetrahydrobiopterin-binding residues include W340 and F353. Heme b is bound at residue Y368. The segment at 387 to 410 (KRPINRKFHFKQIARAVKFTSKLF) is calmodulin-binding. In terms of domain architecture, Flavodoxin-like spans 420 to 615 (ATVLYATETG…AFRKWASSVF (196 aa)). FMN-binding positions include 426-430 (TETGK) and 561-592 (VFAL…ERIH). The 246-residue stretch at 669–914 (KQFVSCTVKA…IRSAPNFHLP (246 aa)) folds into the FAD-binding FR-type domain. Residues 704-715 (YNPGDHVGIIAC) and 847-857 (LQPRFYSISSS) contribute to the FAD site. NADP(+)-binding positions include 922 to 940 (ILIG…WHHR) and 1019 to 1034 (GAHF…AEDV).

The protein belongs to the NOS family. It depends on heme b as a cofactor. FAD serves as cofactor. The cofactor is FMN.

The catalysed reaction is 2 L-arginine + 3 NADPH + 4 O2 + H(+) = 2 L-citrulline + 2 nitric oxide + 3 NADP(+) + 4 H2O. Its function is as follows. Produces nitric oxide (NO) which is a messenger molecule with diverse functions throughout the body. The protein is Nitric oxide synthase-like protein of Bombyx mori (Silk moth).